A 332-amino-acid polypeptide reads, in one-letter code: Solute carrier family 25 member 16 (332 aa).

Solcar repeat units lie at residues 34–120 (FYWL…YKTF), 128–216 (SGHV…LKSV), and 238–328 (LKTH…MKQF). Transmembrane regions (helical) follow at residues 37 to 57 (LRSFLAGGIAGCCAKTTVAPL), 88 to 108 (GYLGLYKGNGAMMIRIFPYGA), 134 to 154 (LMAGSMAGMTAVICTYPLDVV), 191 to 211 (GLMPTILGMAPYAGVSFFTFG), 244 to 264 (LLCGGVAGAIAQTISYPFDVT), and 299 to 319 (GLYRGLSLNYIRCIPSQAVAF).

It belongs to the mitochondrial carrier (TC 2.A.29) family.

The protein resides in the mitochondrion inner membrane. In terms of biological role, may be involved in the transport of coenzyme A in the mitochondrial matrix. Very little is known about the physiological function of this carrier. The protein is Solute carrier family 25 member 16 of Mus musculus (Mouse).